Reading from the N-terminus, the 294-residue chain is Cytidine deaminase (294 aa).

CMP/dCMP-type deaminase domains follow at residues 48 to 168 and 186 to 294; these read DEDA…FGPK and LTGD…VLLG. Residue 89 to 91 coordinates substrate; sequence NME. Histidine 102 serves as a coordination point for Zn(2+). Glutamate 104 (proton donor) is an active-site residue. Cysteine 129 and cysteine 132 together coordinate Zn(2+).

The protein belongs to the cytidine and deoxycytidylate deaminase family. In terms of assembly, homodimer. Requires Zn(2+) as cofactor.

It catalyses the reaction cytidine + H2O + H(+) = uridine + NH4(+). The enzyme catalyses 2'-deoxycytidine + H2O + H(+) = 2'-deoxyuridine + NH4(+). In terms of biological role, this enzyme scavenges exogenous and endogenous cytidine and 2'-deoxycytidine for UMP synthesis. The chain is Cytidine deaminase from Escherichia fergusonii (strain ATCC 35469 / DSM 13698 / CCUG 18766 / IAM 14443 / JCM 21226 / LMG 7866 / NBRC 102419 / NCTC 12128 / CDC 0568-73).